A 181-amino-acid chain; its full sequence is ADP-ribosylation factor 1 (181 aa).

Gly-2 carries N-myristoyl glycine lipidation. GTP is bound by residues Gly-24–Thr-31, Asp-67–Gln-71, and Asn-126–Asp-129.

It belongs to the small GTPase superfamily. Arf family.

The protein resides in the golgi apparatus. The enzyme catalyses GTP + H2O = GDP + phosphate + H(+). GTP-binding protein involved in protein trafficking; may modulate vesicle budding and uncoating within the Golgi apparatus. This chain is ADP-ribosylation factor 1 (ARF1), found in Chlamydomonas reinhardtii (Chlamydomonas smithii).